A 325-amino-acid chain; its full sequence is Elongation factor P--(R)-beta-lysine ligase (325 aa).

76–78 serves as a coordination point for substrate; sequence SPE. Residues 100 to 102 and Asn109 each bind ATP; that span reads RNE. Tyr118 contributes to the substrate binding site. ATP is bound at residue 244–245; sequence EL. Glu251 contacts substrate. Gly300 serves as a coordination point for ATP.

This sequence belongs to the class-II aminoacyl-tRNA synthetase family. EpmA subfamily. As to quaternary structure, homodimer.

It carries out the reaction D-beta-lysine + L-lysyl-[protein] + ATP = N(6)-((3R)-3,6-diaminohexanoyl)-L-lysyl-[protein] + AMP + diphosphate + H(+). In terms of biological role, with EpmB is involved in the beta-lysylation step of the post-translational modification of translation elongation factor P (EF-P). Catalyzes the ATP-dependent activation of (R)-beta-lysine produced by EpmB, forming a lysyl-adenylate, from which the beta-lysyl moiety is then transferred to the epsilon-amino group of a conserved specific lysine residue in EF-P. This Photorhabdus laumondii subsp. laumondii (strain DSM 15139 / CIP 105565 / TT01) (Photorhabdus luminescens subsp. laumondii) protein is Elongation factor P--(R)-beta-lysine ligase.